Reading from the N-terminus, the 185-residue chain is Probable nicotinate-nucleotide adenylyltransferase (185 aa).

It belongs to the NadD family.

The enzyme catalyses nicotinate beta-D-ribonucleotide + ATP + H(+) = deamido-NAD(+) + diphosphate. It functions in the pathway cofactor biosynthesis; NAD(+) biosynthesis; deamido-NAD(+) from nicotinate D-ribonucleotide: step 1/1. Functionally, catalyzes the reversible adenylation of nicotinate mononucleotide (NaMN) to nicotinic acid adenine dinucleotide (NaAD). The sequence is that of Probable nicotinate-nucleotide adenylyltransferase from Methylorubrum extorquens (strain CM4 / NCIMB 13688) (Methylobacterium extorquens).